The chain runs to 358 residues: Trans-enoyl reductase milB (358 aa).

Residues 48–51, 170–173, 193–196, Tyr211, 258–259, and 349–350 each bind NADP(+); these read VDTK, ATAT, SAKH, LD, and VR.

This sequence belongs to the zinc-containing alcohol dehydrogenase family. In terms of assembly, monomer.

The catalysed reaction is 10 malonyl-CoA + acetyl-CoA + 3 AH2 + 8 NADPH + 18 H(+) = cordypyrone A + 3 A + 10 CO2 + 8 NADP(+) + 11 CoA + 8 H2O. The protein operates within secondary metabolite biosynthesis. Functionally, trans-enoyl reductase; part of the gene cluster that mediates the biosynthesis of cordypyrones A and B, 2 pyrones that show modest activities against pathogenic bacteria including methicillin-resistant Staphylococcus aureus (MRSA), Mycobacterium tuberculosis and Bacillus cereus. The HR-PKS milA catalyzes the formation of cordypyrones A via condensation of one acetate with 10 malonate units. Since milA lacks an enoyl reductase domain, the 2 beta-keto processing domains DH and KR of milA collaborate with the trans-enoyl reductase milB to catalyze the different levels of reduction. The cytochrome P450 monooxygenase milC then hydroxylates the C-22 of cordypyrones A to yield cordypyrones B. The protein is Trans-enoyl reductase milB of Cordyceps militaris (strain CM01) (Caterpillar fungus).